A 341-amino-acid chain; its full sequence is Annexin A1 isoform p35 (341 aa).

4 Annexin repeats span residues Phe37 to Lys108, Thr109 to Lys180, Glu192 to Lys263, and Ser267 to Gly338.

The protein belongs to the annexin family. In contrast to mammalian homologs, does not contain a tyrosine phosphorylation site in the N-terminal part.

It is found in the nucleus. It localises to the cytoplasm. Its subcellular location is the cell projection. The protein resides in the cilium. The protein localises to the basolateral cell membrane. In terms of biological role, calcium/phospholipid-binding protein which promotes membrane fusion and is involved in exocytosis. This protein regulates phospholipase A2 activity. It seems to bind from two to four calcium ions with high affinity. This Columba livia (Rock dove) protein is Annexin A1 isoform p35 (CP35).